Here is a 224-residue protein sequence, read N- to C-terminus: UPF0758 protein CV_3079 (224 aa).

The region spanning 102–224 is the MPN domain; that stretch reads ALSSPQQVRD…AESFAERGWL (123 aa). 3 residues coordinate Zn(2+): histidine 173, histidine 175, and aspartate 186. The JAMM motif signature appears at 173–186; sequence HNHPSGVSEPSSAD.

It belongs to the UPF0758 family.

This Chromobacterium violaceum (strain ATCC 12472 / DSM 30191 / JCM 1249 / CCUG 213 / NBRC 12614 / NCIMB 9131 / NCTC 9757 / MK) protein is UPF0758 protein CV_3079.